A 331-amino-acid chain; its full sequence is Ferredoxin--NADP reductase 2 (331 aa).

FAD contacts are provided by E37, Q45, Y50, V90, F124, D286, and T327.

It belongs to the ferredoxin--NADP reductase type 2 family. As to quaternary structure, homodimer. The cofactor is FAD.

It carries out the reaction 2 reduced [2Fe-2S]-[ferredoxin] + NADP(+) + H(+) = 2 oxidized [2Fe-2S]-[ferredoxin] + NADPH. The polypeptide is Ferredoxin--NADP reductase 2 (Listeria welshimeri serovar 6b (strain ATCC 35897 / DSM 20650 / CCUG 15529 / CIP 8149 / NCTC 11857 / SLCC 5334 / V8)).